Consider the following 238-residue polypeptide: Tetraspanin-4 (238 aa).

At 1-13 the chain is on the cytoplasmic side; the sequence is MARACLQAVKYLM. A helical transmembrane segment spans residues 14–34; the sequence is FAFNLLFWLGGCGVLGVGIWL. Residues 35-55 are Extracellular-facing; sequence AATQGSFATLSSSFPSLSAAN. The helical transmembrane segment at 56 to 76 threads the bilayer; that stretch reads LLIITGAFVMAIGFVGCLGAI. Over 77-85 the chain is Cytoplasmic; sequence KENKCLLLT. Residues 86 to 106 form a helical membrane-spanning segment; it reads FFLLLLLVFLLEATIAILFFA. The Extracellular segment spans residues 107-201; that stretch reads YTDKIDRYAQ…ETVKVWLQEN (95 aa). 2 N-linked (GlcNAc...) asparagine glycosylation sites follow: Asn-152 and Asn-161. A helical transmembrane segment spans residues 202–222; sequence LLAVGIFGLCTALVQILGLTF. At 223 to 238 the chain is on the cytoplasmic side; it reads AMTMYCQVVKADTYCA.

It belongs to the tetraspanin (TM4SF) family. In terms of assembly, forms a complex with integrins.

It localises to the membrane. The chain is Tetraspanin-4 (TSPAN4) from Pongo abelii (Sumatran orangutan).